The primary structure comprises 182 residues: uncharacterized protein (182 aa).

The N-terminal stretch at 1–29 (MKKLLKKLVVLFLSSLVIIFNVWYFIICA) is a signal peptide. A helical membrane pass occupies residues 152 to 174 (WNLYFWTAASYNAVIFVFVLVIV).

The protein resides in the membrane. This is an uncharacterized protein from Bacillus subtilis (strain 168).